The primary structure comprises 193 residues: Peptidyl-tRNA hydrolase (193 aa).

Position 14 (tyrosine 14) interacts with tRNA. Catalysis depends on histidine 19, which acts as the Proton acceptor. Positions 64, 66, and 112 each coordinate tRNA.

The protein belongs to the PTH family. As to quaternary structure, monomer.

Its subcellular location is the cytoplasm. It carries out the reaction an N-acyl-L-alpha-aminoacyl-tRNA + H2O = an N-acyl-L-amino acid + a tRNA + H(+). Functionally, hydrolyzes ribosome-free peptidyl-tRNAs (with 1 or more amino acids incorporated), which drop off the ribosome during protein synthesis, or as a result of ribosome stalling. In terms of biological role, catalyzes the release of premature peptidyl moieties from peptidyl-tRNA molecules trapped in stalled 50S ribosomal subunits, and thus maintains levels of free tRNAs and 50S ribosomes. The chain is Peptidyl-tRNA hydrolase from Bartonella quintana (strain Toulouse) (Rochalimaea quintana).